The primary structure comprises 139 residues: Large ribosomal subunit protein uL16 (139 aa).

Belongs to the universal ribosomal protein uL16 family. In terms of assembly, part of the 50S ribosomal subunit.

Binds 23S rRNA and is also seen to make contacts with the A and possibly P site tRNAs. This Chlorobium chlorochromatii (strain CaD3) protein is Large ribosomal subunit protein uL16.